The following is a 134-amino-acid chain: Major capsid protein (134 aa).

As to quaternary structure, homodimer.

It is found in the virion. Its function is as follows. Self-assembles to form a helical, filamentous nucleocapsid. The capsid proteins wrap around the DNA and maintain it in an A-form by non-specific desolvation and specific coordination of the DNA phosphate groups by positively charged residues. This certainly protects the viral DNA under conditions such as the extreme desiccation of its host. This Saccharolobus islandicus (Sulfolobus islandicus) protein is Major capsid protein.